The primary structure comprises 194 residues: Large ribosomal subunit protein eL15 (194 aa).

The tract at residues 161-194 (GLTSAGKKGRGLMYKGKGAEKARPSVRANGKKTK) is disordered.

Belongs to the eukaryotic ribosomal protein eL15 family.

This Methanococcus maripaludis (strain C5 / ATCC BAA-1333) protein is Large ribosomal subunit protein eL15.